We begin with the raw amino-acid sequence, 144 residues long: MTDTDFDNAADLHNLMIKTLEPEELYKKLENNLRKIETSYLDSKHCQDFKRKIEYYKIVPLISETKEIIKVLIQKIETLEIKEGSPKHSKIDEYMSVLSVPGLNLGEILVLVKELLTIDNDLPKNAHVHENIQDDVVYGNFSPN.

Residues 23-82 adopt a coiled-coil conformation; that stretch reads EELYKKLENNLRKIETSYLDSKHCQDFKRKIEYYKIVPLISETKEIIKVLIQKIETLEIK.

This is an uncharacterized protein from Acanthamoeba polyphaga mimivirus (APMV).